A 513-amino-acid chain; its full sequence is Serine/threonine protein phosphatase 2A 55 kDa regulatory subunit B alpha isoform (513 aa).

M1 bears the N-acetylmethionine mark. WD repeat units lie at residues 36-75 (QEVD…NSSG), 112-153 (EIEE…IKKI), 232-270 (AHDY…QSFN), 281-321 (DLSE…LCDS), 340-378 (EIIA…GPVA), and 483-513 (DYTT…MYYA).

This sequence belongs to the phosphatase 2A regulatory subunit B family. PP2A consists of a common heteromeric enzyme, composed of a catalytic subunit (subunits C), a constant regulatory subunit (subunit A), and a variety of regulatory subunits such as subunits B (the R2/B/PR55/B55, R3/B''/PR72/PR130/PR59 and R5/B'/B56 families). Interacts with SIC/RON3. Expressed ubiquitously.

Its function is as follows. The B regulatory subunit may modulate substrate selectivity and catalytic activity, and may also direct the localization of the catalytic enzyme to a particular subcellular compartment. The polypeptide is Serine/threonine protein phosphatase 2A 55 kDa regulatory subunit B alpha isoform (PP2AB1) (Arabidopsis thaliana (Mouse-ear cress)).